Reading from the N-terminus, the 215-residue chain is Adenylate kinase (215 aa).

10–15 (GAGKGT) is an ATP binding site. The NMP stretch occupies residues 30-59 (STGDMLRAAVKAETELGLKAKSVMDSGGLV). AMP-binding positions include Thr-31, Arg-36, 57-59 (GLV), 85-88 (GFPR), and Gln-92. The LID stretch occupies residues 122 to 159 (GRRVHEGSGRIYHTIFNPPKVEGIDDVTGEPLLQRKDD). Residues Arg-123 and 132–133 (IY) contribute to the ATP site. Residues Arg-156 and Arg-167 each contribute to the AMP site. Gly-201 contributes to the ATP binding site.

This sequence belongs to the adenylate kinase family. As to quaternary structure, monomer.

The protein localises to the cytoplasm. The catalysed reaction is AMP + ATP = 2 ADP. It participates in purine metabolism; AMP biosynthesis via salvage pathway; AMP from ADP: step 1/1. Its function is as follows. Catalyzes the reversible transfer of the terminal phosphate group between ATP and AMP. Plays an important role in cellular energy homeostasis and in adenine nucleotide metabolism. The sequence is that of Adenylate kinase from Pseudomonas syringae pv. syringae (strain B728a).